The chain runs to 488 residues: DNA polymerase processivity factor (488 aa).

Disordered stretches follow at residues Met-1–Glu-26, Ser-331–Ser-453, and Pro-469–Pro-488. A compositionally biased stretch (low complexity) spans Ser-331 to Ser-344. Residues Glu-345–Asp-355 are compositionally biased toward polar residues. A compositionally biased stretch (low complexity) spans Ala-368–Ala-379. Positions Pro-383–Thr-393 are enriched in polar residues. A Bipartite nuclear localization signal motif is present at residues Lys-394–Lys-413. Over residues Ser-398–Leu-409 the composition is skewed to basic and acidic residues. Low complexity predominate over residues Ala-437–Ser-453.

It belongs to the herpesviridae DNA polymerase processivity factor family. In terms of assembly, interacts with the DNA polymerase catalytic subunit UL30. Interacts with the origin-binding protein.

The protein localises to the host nucleus. Functionally, plays an essential role in viral DNA replication by acting as the polymerase accessory subunit. Associates with the viral polymerase to increase its processivity and forms high-affinity direct interactions with DNA. Facilitates the origin-binding protein UL9 loading onto DNA thus increasing its ability to assemble into a functional complex capable of unwinding duplex DNA. The polypeptide is DNA polymerase processivity factor (Homo sapiens (Human)).